Here is a 328-residue protein sequence, read N- to C-terminus: Dihydroorotate dehydrogenase (quinone), mitochondrial (328 aa).

The helical transmembrane segment at 21-38 threads the bilayer; the sequence is AHGLSIAGLKTGLVTGSA. Residues 61 to 65 and T85 each bind FMN; that span reads AGYDK. K65 provides a ligand contact to substrate. 110 to 114 lines the substrate pocket; the sequence is NRLGF. 2 residues coordinate FMN: N139 and N170. 170–175 contributes to the substrate binding site; the sequence is NISSPN. Residue S173 is the Nucleophile of the active site. The FMN site is built by K215 and S243. 244-245 serves as a coordination point for substrate; the sequence is NT. Residues G266 and G295 each contribute to the FMN site.

It belongs to the dihydroorotate dehydrogenase family. Type 2 subfamily. The cofactor is FMN.

The protein localises to the mitochondrion inner membrane. The catalysed reaction is (S)-dihydroorotate + a quinone = orotate + a quinol. It participates in pyrimidine metabolism; UMP biosynthesis via de novo pathway; orotate from (S)-dihydroorotate (quinone route): step 1/1. Its function is as follows. Catalyzes the conversion of dihydroorotate to orotate with quinone as electron acceptor. The sequence is that of Dihydroorotate dehydrogenase (quinone), mitochondrial (URA1) from Cyclocybe aegerita (Black poplar mushroom).